We begin with the raw amino-acid sequence, 658 residues long: Staphylocoagulase (658 aa).

Residues 1-26 form the signal peptide; sequence MKKQIISLGALAVASSLFTWDNKADA. Composition is skewed to polar residues over residues 391–406, 428–440, 499–514, and 521–531; these read MEQN…TQPT, GTES…QGES, PSET…QDGT, and PTQNKPSETNA. The tract at residues 391–531 is disordered; that stretch reads MEQNRPSLSD…TQNKPSETNA (141 aa). 6 tandem repeats follow at residues 492 to 518, 519 to 545, 546 to 572, 573 to 599, 600 to 626, and 627 to 653. Positions 492-653 are 6 X 27 AA tandem repeats of A-R-P-[RT]-[FQY]-[NK]-K-P-S-[EK]-T-N-A-Y-N-V-T-T-[NH]-[QA]-[DN]-G-[TQ]-[VA]-[ST]-Y-G; that stretch reads ARPRFNKPSE…THADGTATYG (162 aa). Residues 619 to 658 form a disordered region; that stretch reads ANGQVSYGARPTQKKPSETNAYNVTTHADGTATYGPRVTK. The span at 636–646 shows a compositional bias: polar residues; sequence ETNAYNVTTHA.

It belongs to the staphylocoagulase family.

In terms of biological role, staphylocoagulase is an extracellular protein which specifically forms a complex with human prothrombin. This complex named staphylothrombin can clot fibrinogen without any proteolytic cleavage of prothrombin. This is Staphylocoagulase from Staphylococcus aureus.